A 100-amino-acid chain; its full sequence is Aspartyl/glutamyl-tRNA(Asn/Gln) amidotransferase subunit C (100 aa).

It belongs to the GatC family. In terms of assembly, heterotrimer of A, B and C subunits.

It catalyses the reaction L-glutamyl-tRNA(Gln) + L-glutamine + ATP + H2O = L-glutaminyl-tRNA(Gln) + L-glutamate + ADP + phosphate + H(+). It carries out the reaction L-aspartyl-tRNA(Asn) + L-glutamine + ATP + H2O = L-asparaginyl-tRNA(Asn) + L-glutamate + ADP + phosphate + 2 H(+). Allows the formation of correctly charged Asn-tRNA(Asn) or Gln-tRNA(Gln) through the transamidation of misacylated Asp-tRNA(Asn) or Glu-tRNA(Gln) in organisms which lack either or both of asparaginyl-tRNA or glutaminyl-tRNA synthetases. The reaction takes place in the presence of glutamine and ATP through an activated phospho-Asp-tRNA(Asn) or phospho-Glu-tRNA(Gln). In Dictyoglomus turgidum (strain DSM 6724 / Z-1310), this protein is Aspartyl/glutamyl-tRNA(Asn/Gln) amidotransferase subunit C.